The sequence spans 556 residues: Valencene synthase (556 aa).

Polar residues predominate over residues 1–12 (MSTQVSASSLAQ). The disordered stretch occupies residues 1 to 24 (MSTQVSASSLAQIPQPKNRPVANF). Mg(2+)-binding residues include Asp-310, Asp-314, and Glu-462. The short motif at 310–314 (DDIHD) is the DDXXD motif element.

This sequence belongs to the terpene synthase family. Tpsa subfamily. Mg(2+) serves as cofactor. As to expression, expressed in flowers and anthers. Detected inside the pollen grains, but not in stems, leaves, tendrils, roots, seeds, pistils or caps.

The protein resides in the cytoplasm. The enzyme catalyses (2E,6E)-farnesyl diphosphate = (+)-valencene + diphosphate. It catalyses the reaction (2E,6E)-farnesyl diphosphate = (-)-7-epi-alpha-selinene + diphosphate. It participates in secondary metabolite biosynthesis; terpenoid biosynthesis. Its function is as follows. Involved in the biosynthesis of valencene, a major volatile emitted from flowers of grapevine. Can use farnesyl diphosphate as substrate, but not geranyl diphosphate or geranylgeranyl diphosphate. Produces mainly (+)-valencene and (-)-7-epi-alpha-selinene along with five minor products. This is Valencene synthase (ValCS) from Vitis vinifera (Grape).